We begin with the raw amino-acid sequence, 333 residues long: GDP-fucose transporter 1 (333 aa).

8 consecutive transmembrane segments (helical) span residues 13–33, 45–65, 95–115, 139–159, 169–189, 211–231, 239–259, and 293–313; these read SIKIAFVVALYWVVSISMVFL, APMFVTWFQCVVAVVTCFILG, LVFVGMIAFNNLALKFVGVAF, TSMPALLMCGVIVAGFFVGVN, MAGIMYGVLASLCVALNAIYI, AIFLFLPVITFMGEIPDIAAS, YWFLMTVAGLLGIAIGLVSML, and TATWWLGNVFVLGGSLGYVLV.

Belongs to the TPT transporter family. SLC35C subfamily.

It is found in the golgi apparatus membrane. It carries out the reaction GMP(out) + GDP-beta-L-fucose(in) = GMP(in) + GDP-beta-L-fucose(out). Antiporter specific for GDP-l-fucose and depending on the concomitant reverse transport of GMP. Involved in GDP-fucose import from the cytoplasm into the Golgi lumen. In Monosiga brevicollis (Choanoflagellate), this protein is GDP-fucose transporter 1 (slc35c1).